The sequence spans 207 residues: Guanylate kinase (207 aa).

Residues 4-184 form the Guanylate kinase-like domain; sequence GTLYIVSAPS…ALLDLKTIIR (181 aa). Residue 11 to 18 participates in ATP binding; that stretch reads APSGAGKS.

This sequence belongs to the guanylate kinase family.

The protein localises to the cytoplasm. It catalyses the reaction GMP + ATP = GDP + ADP. In terms of biological role, essential for recycling GMP and indirectly, cGMP. The polypeptide is Guanylate kinase (Sodalis glossinidius (strain morsitans)).